The primary structure comprises 215 residues: Protein N-lysine methyltransferase METTL21A (215 aa).

S-adenosyl-L-methionine-binding positions include Trp47, 73-75 (GAG), Asp94, Trp125, and Ala141.

This sequence belongs to the methyltransferase superfamily. METTL21 family.

The protein localises to the cytoplasm. It carries out the reaction L-lysyl-[protein] + 3 S-adenosyl-L-methionine = N(6),N(6),N(6)-trimethyl-L-lysyl-[protein] + 3 S-adenosyl-L-homocysteine + 3 H(+). Functionally, protein-lysine methyltransferase that selectively trimethylates residues in heat shock protein 70 (HSP70) family members. The protein is Protein N-lysine methyltransferase METTL21A (mettl21a) of Xenopus tropicalis (Western clawed frog).